A 333-amino-acid polypeptide reads, in one-letter code: Glycerol-3-phosphate dehydrogenase [NAD(P)+] (333 aa).

Residues Y14, H34, and K108 each coordinate NADPH. Sn-glycerol 3-phosphate contacts are provided by K108, G137, and T139. A141 contributes to the NADPH binding site. Residues K193, D247, S257, R258, and N259 each coordinate sn-glycerol 3-phosphate. K193 functions as the Proton acceptor in the catalytic mechanism. R258 serves as a coordination point for NADPH. 2 residues coordinate NADPH: L282 and E284.

The protein belongs to the NAD-dependent glycerol-3-phosphate dehydrogenase family.

It localises to the cytoplasm. The enzyme catalyses sn-glycerol 3-phosphate + NAD(+) = dihydroxyacetone phosphate + NADH + H(+). It carries out the reaction sn-glycerol 3-phosphate + NADP(+) = dihydroxyacetone phosphate + NADPH + H(+). It participates in membrane lipid metabolism; glycerophospholipid metabolism. In terms of biological role, catalyzes the reduction of the glycolytic intermediate dihydroxyacetone phosphate (DHAP) to sn-glycerol 3-phosphate (G3P), the key precursor for phospholipid synthesis. This Blochmanniella floridana protein is Glycerol-3-phosphate dehydrogenase [NAD(P)+].